The chain runs to 299 residues: ATP phosphoribosyltransferase (299 aa).

This sequence belongs to the ATP phosphoribosyltransferase family. Long subfamily. In terms of assembly, equilibrium between an active dimeric form, an inactive hexameric form and higher aggregates. Interconversion between the various forms is largely reversible and is influenced by the natural substrates and inhibitors of the enzyme. The cofactor is Mg(2+).

It is found in the cytoplasm. It carries out the reaction 1-(5-phospho-beta-D-ribosyl)-ATP + diphosphate = 5-phospho-alpha-D-ribose 1-diphosphate + ATP. Its pathway is amino-acid biosynthesis; L-histidine biosynthesis; L-histidine from 5-phospho-alpha-D-ribose 1-diphosphate: step 1/9. Its activity is regulated as follows. Feedback inhibited by histidine. Functionally, catalyzes the condensation of ATP and 5-phosphoribose 1-diphosphate to form N'-(5'-phosphoribosyl)-ATP (PR-ATP). Has a crucial role in the pathway because the rate of histidine biosynthesis seems to be controlled primarily by regulation of HisG enzymatic activity. This chain is ATP phosphoribosyltransferase, found in Enterobacter sp. (strain 638).